Consider the following 148-residue polypeptide: Deoxyuridine 5'-triphosphate nucleotidohydrolase (148 aa).

Residues 68 to 70 (RSG), N81, 85 to 87 (TID), and K95 contribute to the substrate site.

The protein belongs to the dUTPase family. Mg(2+) is required as a cofactor.

The catalysed reaction is dUTP + H2O = dUMP + diphosphate + H(+). It participates in pyrimidine metabolism; dUMP biosynthesis; dUMP from dCTP (dUTP route): step 2/2. In terms of biological role, this enzyme is involved in nucleotide metabolism: it produces dUMP, the immediate precursor of thymidine nucleotides and it decreases the intracellular concentration of dUTP so that uracil cannot be incorporated into DNA. The polypeptide is Deoxyuridine 5'-triphosphate nucleotidohydrolase (Rickettsia conorii (strain ATCC VR-613 / Malish 7)).